The sequence spans 475 residues: Phenolic acid decarboxylase (475 aa).

Positions 161, 183, and 225 each coordinate Mn(2+). Prenylated FMN contacts are provided by residues 161–166 and 182–183; these read NVGIYR and MH. The Proton donor role is filled by Glu-274.

Belongs to the UbiD family. YclC subfamily. Prenylated FMN is required as a cofactor. Mn(2+) serves as cofactor.

It catalyses the reaction 4-hydroxybenzoate + H(+) = phenol + CO2. It carries out the reaction vanillate + H(+) = guaiacol + CO2. Its function is as follows. Involved in the non-oxidative decarboxylation and detoxification of phenolic derivatives under both aerobic and anaerobic conditions. Phenolic acid decarboxylase that catalyzes the reversible decarboxylation of 4-hydroxybenzoate and vanillate. The sequence is that of Phenolic acid decarboxylase from Escherichia coli O157:H7.